An 87-amino-acid chain; its full sequence is Translation initiation factor IF-1 2 (87 aa).

The S1-like domain maps to methionine 1–isoleucine 72.

The protein belongs to the IF-1 family. In terms of assembly, component of the 30S ribosomal translation pre-initiation complex which assembles on the 30S ribosome in the order IF-2 and IF-3, IF-1 and N-formylmethionyl-tRNA(fMet); mRNA recruitment can occur at any time during PIC assembly.

The protein resides in the cytoplasm. Functionally, one of the essential components for the initiation of protein synthesis. Stabilizes the binding of IF-2 and IF-3 on the 30S subunit to which N-formylmethionyl-tRNA(fMet) subsequently binds. Helps modulate mRNA selection, yielding the 30S pre-initiation complex (PIC). Upon addition of the 50S ribosomal subunit IF-1, IF-2 and IF-3 are released leaving the mature 70S translation initiation complex. This chain is Translation initiation factor IF-1 2, found in Dechloromonas aromatica (strain RCB).